The following is a 168-amino-acid chain: Small ribosomal subunit protein uS5 (168 aa).

Positions 13–76 constitute an S5 DRBM domain; it reads LKEQVVDIKR…EDAKKNLIHV (64 aa).

It belongs to the universal ribosomal protein uS5 family. Part of the 30S ribosomal subunit. Contacts proteins S4 and S8.

Functionally, with S4 and S12 plays an important role in translational accuracy. In terms of biological role, located at the back of the 30S subunit body where it stabilizes the conformation of the head with respect to the body. The chain is Small ribosomal subunit protein uS5 from Alkaliphilus oremlandii (strain OhILAs) (Clostridium oremlandii (strain OhILAs)).